A 260-amino-acid polypeptide reads, in one-letter code: Indole-3-glycerol phosphate synthase (260 aa).

It belongs to the TrpC family.

The enzyme catalyses 1-(2-carboxyphenylamino)-1-deoxy-D-ribulose 5-phosphate + H(+) = (1S,2R)-1-C-(indol-3-yl)glycerol 3-phosphate + CO2 + H2O. It functions in the pathway amino-acid biosynthesis; L-tryptophan biosynthesis; L-tryptophan from chorismate: step 4/5. This is Indole-3-glycerol phosphate synthase from Thermoanaerobacter sp. (strain X514).